The following is a 435-amino-acid chain: Putative GMP synthase [glutamine-hydrolyzing] 2 (435 aa).

The Glutamine amidotransferase type-1; truncated domain occupies Met1–Asn120. Residues Trp121–Arg310 form the GMPS ATP-PPase domain. Ser148–Ser154 contacts ATP.

As to quaternary structure, homodimer.

It carries out the reaction XMP + L-glutamine + ATP + H2O = GMP + L-glutamate + AMP + diphosphate + 2 H(+). Its pathway is purine metabolism; GMP biosynthesis; GMP from XMP (L-Gln route): step 1/1. Its function is as follows. Catalyzes the synthesis of GMP from XMP. The polypeptide is Putative GMP synthase [glutamine-hydrolyzing] 2 (guaA2) (Bacteroides thetaiotaomicron (strain ATCC 29148 / DSM 2079 / JCM 5827 / CCUG 10774 / NCTC 10582 / VPI-5482 / E50)).